A 339-amino-acid polypeptide reads, in one-letter code: Anthranilate phosphoribosyltransferase (339 aa).

5-phospho-alpha-D-ribose 1-diphosphate is bound by residues G79, 82-83 (GD), S87, 89-92 (NIST), 107-115 (KHGNRAASS), and A119. G79 serves as a coordination point for anthranilate. Residue S91 coordinates Mg(2+). N110 provides a ligand contact to anthranilate. An anthranilate-binding site is contributed by R165. Residues D224 and E225 each coordinate Mg(2+).

This sequence belongs to the anthranilate phosphoribosyltransferase family. As to quaternary structure, homodimer. Requires Mg(2+) as cofactor.

The enzyme catalyses N-(5-phospho-beta-D-ribosyl)anthranilate + diphosphate = 5-phospho-alpha-D-ribose 1-diphosphate + anthranilate. The protein operates within amino-acid biosynthesis; L-tryptophan biosynthesis; L-tryptophan from chorismate: step 2/5. Catalyzes the transfer of the phosphoribosyl group of 5-phosphorylribose-1-pyrophosphate (PRPP) to anthranilate to yield N-(5'-phosphoribosyl)-anthranilate (PRA). This is Anthranilate phosphoribosyltransferase from Lactiplantibacillus plantarum (strain ATCC BAA-793 / NCIMB 8826 / WCFS1) (Lactobacillus plantarum).